The sequence spans 54 residues: Large ribosomal subunit protein bL33 (54 aa).

This sequence belongs to the bacterial ribosomal protein bL33 family.

The polypeptide is Large ribosomal subunit protein bL33 (Petrotoga mobilis (strain DSM 10674 / SJ95)).